The chain runs to 216 residues: MTISNQSQVLLSANELTCIREERILFDGLSFNINAGDIVQIEGPNGAGKTSLLRIIAGLSRPYAGEVEYSGENINRCRDEFNHDLLYLGHLAGVKSELTAEENLNFNLRISGYDDFDTTAILAKVNLTGFEEALAGHLSAGQHRRTALARLQHSNCKIWILDEPFTAIDKKGVEELEQLFIQHAESGGCVILTTHQDMSIISDAMLRKITLDYRFV.

One can recognise an ABC transporter domain in the interval 11–216 (LSANELTCIR…RKITLDYRFV (206 aa)). 43–50 (GPNGAGKT) lines the ATP pocket.

It belongs to the ABC transporter superfamily. CcmA exporter (TC 3.A.1.107) family. The complex is composed of two ATP-binding proteins (CcmA) and two transmembrane proteins (CcmB).

The protein resides in the cell inner membrane. It carries out the reaction heme b(in) + ATP + H2O = heme b(out) + ADP + phosphate + H(+). Part of the ABC transporter complex CcmAB involved in the biogenesis of c-type cytochromes; once thought to export heme, this seems not to be the case, but its exact role is uncertain. Responsible for energy coupling to the transport system. This chain is Cytochrome c biogenesis ATP-binding export protein CcmA, found in Shewanella frigidimarina (strain NCIMB 400).